Here is a 476-residue protein sequence, read N- to C-terminus: Ureidoglycolate hydrolase (476 aa).

The N-terminal stretch at 1-25 (MESLKRFLCSIALLLISLLLPSSLA) is a signal peptide. Positions 138, 149, 184, and 254 each coordinate Mn(2+). Residues 183 to 184 (EE), 254 to 257 (HIEQ), His290, Asn340, Arg353, 423 to 424 (YH), and His448 contribute to the substrate site. The tract at residues 276–391 (APASLKVEFE…LSEFKIVNQD (116 aa)) is involved in dimerization. His448 is a Mn(2+) binding site.

It belongs to the peptidase M20 family. Homodimer. The cofactor is Mn(2+). Ni(2+) serves as cofactor. Requires Co(2+) as cofactor.

Its subcellular location is the endoplasmic reticulum. The enzyme catalyses (S)-ureidoglycolate + H2O + 2 H(+) = glyoxylate + 2 NH4(+) + CO2. It functions in the pathway nitrogen metabolism; (S)-allantoin degradation; glyoxylate from (S)-ureidoglycolate: step 1/1. Its function is as follows. Involved in the catabolism of purine nucleotides. Can use (S)-ureidoglycolate as substrate, but not (R)-ureidoglycolate or allantoate. The sequential activity of AAH, UGLYAH and UAH allows a complete purine breakdown without the intermediate generation of urea. The chain is Ureidoglycolate hydrolase from Arabidopsis thaliana (Mouse-ear cress).